Here is a 93-residue protein sequence, read N- to C-terminus: Cobalt transport protein CbiN (93 aa).

A run of 2 helical transmembrane segments spans residues 5–25 (LMLLAMVVALVILPFFINHGG) and 63–83 (LLFTLQGSLGAAVIFYILGYC).

Belongs to the CbiN family. In terms of assembly, forms an energy-coupling factor (ECF) transporter complex composed of an ATP-binding protein (A component, CbiO), a transmembrane protein (T component, CbiQ) and 2 possible substrate-capture proteins (S components, CbiM and CbiN) of unknown stoichimetry.

It localises to the cell inner membrane. The protein operates within cofactor biosynthesis; adenosylcobalamin biosynthesis. Part of the energy-coupling factor (ECF) transporter complex CbiMNOQ involved in cobalt import. This chain is Cobalt transport protein CbiN, found in Salmonella newport (strain SL254).